Here is a 395-residue protein sequence, read N- to C-terminus: Putative pyridoxal phosphate-dependent acyltransferase (395 aa).

110–111 (GF) contacts pyridoxal 5'-phosphate. His-135 is a binding site for substrate. Residues Ser-185, 210–213 (DDAH), and 240–243 (TLSK) contribute to the pyridoxal 5'-phosphate site. The residue at position 243 (Lys-243) is an N6-(pyridoxal phosphate)lysine. A substrate-binding site is contributed by Thr-357.

The protein belongs to the class-II pyridoxal-phosphate-dependent aminotransferase family. Homodimer. Requires pyridoxal 5'-phosphate as cofactor.

The polypeptide is Putative pyridoxal phosphate-dependent acyltransferase (Staphylococcus aureus (strain Mu50 / ATCC 700699)).